The sequence spans 122 residues: S-adenosylmethionine decarboxylase proenzyme (122 aa).

The active-site Schiff-base intermediate with substrate; via pyruvic acid is the serine 63. The residue at position 63 (serine 63) is a Pyruvic acid (Ser); by autocatalysis. The active-site Proton acceptor; for processing activity is the histidine 68. Cysteine 83 functions as the Proton donor; for catalytic activity in the catalytic mechanism.

It belongs to the prokaryotic AdoMetDC family. Type 1 subfamily. As to quaternary structure, heterotetramer of two alpha and two beta chains arranged as a dimer of alpha/beta heterodimers. Pyruvate is required as a cofactor. Is synthesized initially as an inactive proenzyme. Formation of the active enzyme involves a self-maturation process in which the active site pyruvoyl group is generated from an internal serine residue via an autocatalytic post-translational modification. Two non-identical subunits are generated from the proenzyme in this reaction, and the pyruvate is formed at the N-terminus of the alpha chain, which is derived from the carboxyl end of the proenzyme. The post-translation cleavage follows an unusual pathway, termed non-hydrolytic serinolysis, in which the side chain hydroxyl group of the serine supplies its oxygen atom to form the C-terminus of the beta chain, while the remainder of the serine residue undergoes an oxidative deamination to produce ammonia and the pyruvoyl group blocking the N-terminus of the alpha chain.

It carries out the reaction S-adenosyl-L-methionine + H(+) = S-adenosyl 3-(methylsulfanyl)propylamine + CO2. Its pathway is amine and polyamine biosynthesis; S-adenosylmethioninamine biosynthesis; S-adenosylmethioninamine from S-adenosyl-L-methionine: step 1/1. Its function is as follows. Catalyzes the decarboxylation of S-adenosylmethionine to S-adenosylmethioninamine (dcAdoMet), the propylamine donor required for the synthesis of the polyamines spermine and spermidine from the diamine putrescine. The protein is S-adenosylmethionine decarboxylase proenzyme of Methanococcus maripaludis (strain C7 / ATCC BAA-1331).